Here is a 184-residue protein sequence, read N- to C-terminus: Putative manganese efflux pump MntP (184 aa).

A run of 6 helical transmembrane segments spans residues 3 to 23 (LLSMVLIGVGLAMDAFSISVS), 36 to 56 (ALISALSFGTFQAAMPVLGWV), 65 to 85 (VSALAPWAAFILLLIIGLKMI), 103 to 123 (LLVLSIATSIDAFAVGVSFAL), 126 to 146 (ISIWLPVIVIGLITFILSLAG), and 163 to 183 (ALGGLILILIGLKILLENVSF).

The protein belongs to the MntP (TC 9.B.29) family.

The protein localises to the cell membrane. Functionally, probably functions as a manganese efflux pump. The polypeptide is Putative manganese efflux pump MntP (Methanothermobacter thermautotrophicus (strain ATCC 29096 / DSM 1053 / JCM 10044 / NBRC 100330 / Delta H) (Methanobacterium thermoautotrophicum)).